The sequence spans 218 residues: Octanoyltransferase (218 aa).

The region spanning 32–214 (ALTPDEIWLV…HFTQLLGYND (183 aa)) is the BPL/LPL catalytic domain. Substrate is bound by residues 71–78 (RGGQITYH), 143–145 (SLG), and 156–158 (GLA). Cys174 functions as the Acyl-thioester intermediate in the catalytic mechanism.

The protein belongs to the LipB family.

It is found in the cytoplasm. The enzyme catalyses octanoyl-[ACP] + L-lysyl-[protein] = N(6)-octanoyl-L-lysyl-[protein] + holo-[ACP] + H(+). It functions in the pathway protein modification; protein lipoylation via endogenous pathway; protein N(6)-(lipoyl)lysine from octanoyl-[acyl-carrier-protein]: step 1/2. In terms of biological role, catalyzes the transfer of endogenously produced octanoic acid from octanoyl-acyl-carrier-protein onto the lipoyl domains of lipoate-dependent enzymes. Lipoyl-ACP can also act as a substrate although octanoyl-ACP is likely to be the physiological substrate. In Histophilus somni (strain 129Pt) (Haemophilus somnus), this protein is Octanoyltransferase.